A 182-amino-acid polypeptide reads, in one-letter code: Chromophore lyase CpcS/CpeS (182 aa).

It belongs to the CpcS/CpeS biliprotein lyase family.

Its function is as follows. Covalently attaches a chromophore to Cys residue(s) of phycobiliproteins. The protein is Chromophore lyase CpcS/CpeS of Thermosynechococcus vestitus (strain NIES-2133 / IAM M-273 / BP-1).